Reading from the N-terminus, the 458-residue chain is UPF0210 protein MMP1427 (458 aa).

This sequence belongs to the UPF0210 family.

In Methanococcus maripaludis (strain DSM 14266 / JCM 13030 / NBRC 101832 / S2 / LL), this protein is UPF0210 protein MMP1427.